Reading from the N-terminus, the 549-residue chain is MSQPSISKSMTIGESGLAVVFAATAFLCVIAAAKALDAPFAFHAALSAAASVAAVFCIVNRYFERPAALPPAEINGRPNYNMGPIKFSSFMAMFWGIAGFLVGLIIASQLAWPALNFDLPWISFGRLRPLHTSAVIFAFGGNVLIATSFYVVQKSCRVRLAGDLAPWFVVVGYNFFILVAGTGYLLGVTQSKEYAEPEWYADLWLTIVWVVYLLVFLATIIKRKEPHIFVANWFYLAFIVTIAVLHLGNNPALPVSAFGSKSYVAWGGIQDAMFQWWYGHNAVGFFLTAGFLAIMYYFIPKRAERPIYSYRLSIIHFWALIFLYIWAGPHHLHYTALPDWTQTLGMTFSIMLWMPSWGGMINGLMTLSGAWDKLRTDPVLRMLVVSVAFYGMSTFEGPMMSIKVVNSLSHYTDWTIGHVHSGALGWVGFVSFGALYCLVPWAWNRKGLYSLKLVNWHFWVATLGIVLYISAMWVSGILQGLMWRAYTSLGFLEYSFIETVEAMHPFYIIRAAGGGLFLIGALIMAYNLWMTVRVGEAEVQMPVALQPAE.

A run of 3 helical transmembrane segments spans residues 12-32, 39-59, and 87-107; these read IGES…VIAA, PFAF…FCIV, and FSSF…LIIA. Residue H131 participates in heme b binding. 8 helical membrane-spanning segments follow: residues 132-152, 168-188, 201-221, 228-248, 279-299, 312-332, 344-364, and 382-402; these read TSAV…FYVV, FVVV…LLGV, ADLW…ATII, IFVA…LHLG, GHNA…YYFI, LSII…PHHL, LGMT…INGL, and MLVV…MMSI. Cu cation contacts are provided by H280, H330, and H331. Heme b-binding residues include H418 and H420. The next 3 membrane-spanning stretches (helical) occupy residues 423–443, 458–478, and 512–532; these read ALGW…PWAW, FWVA…SGIL, and AGGG…WMTV.

This sequence belongs to the heme-copper respiratory oxidase family. Requires Cu(2+) as cofactor. Heme b serves as cofactor.

The protein localises to the cell membrane. It catalyses the reaction 4 Fe(II)-[cytochrome c] + O2 + 8 H(+)(in) = 4 Fe(III)-[cytochrome c] + 2 H2O + 4 H(+)(out). The protein operates within energy metabolism; oxidative phosphorylation. Its function is as follows. Cytochrome c oxidase is the component of the respiratory chain that catalyzes the reduction of oxygen to water. Subunits 1-3 form the functional core of the enzyme complex. Co I is the catalytic subunit of the enzyme. Electrons originating in cytochrome c or a quinol are transferred to the bimetallic center formed by a high-spin heme and copper B. This chain is Cytochrome c oxidase subunit 1 homolog, bacteroid (fixN), found in Bradyrhizobium diazoefficiens (strain JCM 10833 / BCRC 13528 / IAM 13628 / NBRC 14792 / USDA 110).